Consider the following 517-residue polypeptide: Apolipoprotein N-acyltransferase (517 aa).

The next 7 helical transmembrane spans lie at 5-25 (SFFS…ATLT), 26-46 (FAPY…LWLL), 55-75 (GLIG…WVHV), 90-110 (FLMS…GALF), 128-148 (VIWL…PWLW), 162-182 (APIL…GALV), and 193-213 (LMVP…SWVV). The CN hydrolase domain occupies 225-471 (IQGNVPQELK…TAVLRATITP (247 aa)). The active-site Proton acceptor is Glu264. Lys330 is a catalytic residue. Cys382 serves as the catalytic Nucleophile.

It belongs to the CN hydrolase family. Apolipoprotein N-acyltransferase subfamily.

Its subcellular location is the cell inner membrane. It carries out the reaction N-terminal S-1,2-diacyl-sn-glyceryl-L-cysteinyl-[lipoprotein] + a glycerophospholipid = N-acyl-S-1,2-diacyl-sn-glyceryl-L-cysteinyl-[lipoprotein] + a 2-acyl-sn-glycero-3-phospholipid + H(+). The protein operates within protein modification; lipoprotein biosynthesis (N-acyl transfer). In terms of biological role, catalyzes the phospholipid dependent N-acylation of the N-terminal cysteine of apolipoprotein, the last step in lipoprotein maturation. The chain is Apolipoprotein N-acyltransferase from Photobacterium profundum (strain SS9).